The sequence spans 200 residues: Adenylate kinase (200 aa).

An ATP-binding site is contributed by 10 to 15 (GAGKGT). An NMP region spans residues 30-59 (STGDLFRANISQQTELGKLAKSYMDAGNLV). AMP-binding positions include T31, R36, 57–59 (NLV), 84–87 (GFPR), and Q91. The interval 125–163 (GRRVCRNDSAHVFHVTYTPPKKEGVCDVCGGELYQRDDD) is LID. ATP-binding positions include R126 and 136–137 (VF). AMP contacts are provided by R160 and R171.

Belongs to the adenylate kinase family. In terms of assembly, monomer.

The protein resides in the cytoplasm. The catalysed reaction is AMP + ATP = 2 ADP. It participates in purine metabolism; AMP biosynthesis via salvage pathway; AMP from ADP: step 1/1. Its function is as follows. Catalyzes the reversible transfer of the terminal phosphate group between ATP and AMP. Plays an important role in cellular energy homeostasis and in adenine nucleotide metabolism. This chain is Adenylate kinase, found in Streptomyces lividans.